We begin with the raw amino-acid sequence, 273 residues long: MGIELLKQEHYRIFDQTSLGNTFHATQSFAMDDTLCASVATEGAAIRSWVHHETVVLGIQDARLPHLDDGIDVLHAHGFQPVIRNSGGLAVVLDAGVLNISLVLPERGGIDIDSGYEAMLALVRRMFAEETDAINAGEVVGSYCPGSYDLSIAGKKFAGISQRRVRGGVAVQIYLCVNGSGSARAQLVRDFYAAALQGETTKFVYPTVVPETMASLEELLQRPLTVEDCLVRVYRSLMELGATLTPSVLSEVENERFGVNLGRMLDRNEKVLG.

One can recognise a BPL/LPL catalytic domain in the interval A40 to T245. The Acyl-thioester intermediate role is filled by C144.

Belongs to the octanoyltransferase LipL family.

It carries out the reaction N(6)-octanoyl-L-lysyl-[glycine-cleavage complex H protein] + L-lysyl-[lipoyl-carrier protein] = N(6)-octanoyl-L-lysyl-[lipoyl-carrier protein] + L-lysyl-[glycine-cleavage complex H protein]. Its pathway is protein modification; protein lipoylation via endogenous pathway; protein N(6)-(lipoyl)lysine from octanoyl-[acyl-carrier-protein]. Its function is as follows. Catalyzes the amidotransfer (transamidation) of the octanoyl moiety from octanoyl-GcvH to the lipoyl domain of the E2 subunit of lipoate-dependent enzymes. This Exiguobacterium sibiricum (strain DSM 17290 / CCUG 55495 / CIP 109462 / JCM 13490 / 255-15) protein is Octanoyl-[GcvH]:protein N-octanoyltransferase.